The sequence spans 257 residues: Large ribosomal subunit protein eL8z (257 aa).

Belongs to the eukaryotic ribosomal protein eL8 family.

This is Large ribosomal subunit protein eL8z (RPL7AA) from Arabidopsis thaliana (Mouse-ear cress).